The primary structure comprises 366 residues: MVLSSQPPSSRSATGSVLSWPQVLGRLTAGQDLTRGQAAWAMGQVMTGNARPAQIAAFAVAMKMKVPTAAEVSELADVMLSHARKLPTEAICQDIGETVDIAGTGGDGANTVNLSTMAAIVVAAAGVPVVKHGNRASSSLSGGADTLEALGVRIDLGPEQVANSLAEIGIGFCFAPLFQPSYRYASAVRHEIGVPTVFNILGPLTNPAWPRAGLIGCAFGNLAEVMAGVFAARRSSVLVVHGDDGLDELTTTTTSTIWRVQAGTVDKLTFDPVEFGFARAHLDDLLGGDAQTNAAKVRAVLAGAKGPVRDAVVLNAAGAIVAYAGLSSHAEWSPAWDDGLARASAAIDSGAAEQLLARWVRFSQQV.

Residues G103, 106 to 107, T111, 113 to 116, 131 to 139, and G143 each bind 5-phospho-alpha-D-ribose 1-diphosphate; these read GD, NLST, and KHGNRASSS. Position 103 (G103) interacts with anthranilate. S115 contacts Mg(2+). An anthranilate-binding site is contributed by N134. R189 provides a ligand contact to anthranilate. Positions 247 and 248 each coordinate Mg(2+).

This sequence belongs to the anthranilate phosphoribosyltransferase family. In terms of assembly, homodimer. Requires Mg(2+) as cofactor.

It catalyses the reaction N-(5-phospho-beta-D-ribosyl)anthranilate + diphosphate = 5-phospho-alpha-D-ribose 1-diphosphate + anthranilate. It participates in amino-acid biosynthesis; L-tryptophan biosynthesis; L-tryptophan from chorismate: step 2/5. In terms of biological role, catalyzes the transfer of the phosphoribosyl group of 5-phosphorylribose-1-pyrophosphate (PRPP) to anthranilate to yield N-(5'-phosphoribosyl)-anthranilate (PRA). The protein is Anthranilate phosphoribosyltransferase of Mycobacterium leprae (strain Br4923).